The primary structure comprises 414 residues: NADH-ubiquinone oxidoreductase chain 4 (414 aa).

10 helical membrane-spanning segments follow: residues 18–38 (LVQLYIVYEASLIPMVIMIGV), 47–67 (IAAFQILIYTLIGSIFMLMSI), 96–116 (IIFIGFFIGFAVKIPIAPLHL), 126–146 (PTAGSVLLAGILLKLGGYGYI), 160–180 (YFPIIGGICLISILYTGIATL), 188–208 (IVAYSSISHMNVIVLGLFSGV), 216–236 (IILMIGHGIVSGGLFLCIGVI), 254–274 (MMPIMAILFFLLVLGNIAFPI), 293–313 (IIIAFFSALSMIITAIYSFWL), and 375–395 (VNIFEFVSIGLMVILMLIVGM).

The protein belongs to the complex I subunit 4 family.

The protein resides in the mitochondrion membrane. It carries out the reaction a ubiquinone + NADH + 5 H(+)(in) = a ubiquinol + NAD(+) + 4 H(+)(out). In terms of biological role, core subunit of the mitochondrial membrane respiratory chain NADH dehydrogenase (Complex I) that is believed to belong to the minimal assembly required for catalysis. Complex I functions in the transfer of electrons from NADH to the respiratory chain. The immediate electron acceptor for the enzyme is believed to be ubiquinone. The polypeptide is NADH-ubiquinone oxidoreductase chain 4 (nad4) (Dictyostelium citrinum (Slime mold)).